The sequence spans 438 residues: Enolase (438 aa).

Positions 159 and 168 each coordinate substrate. E211 acts as the Proton donor in catalysis. D246, E297, and D322 together coordinate Mg(2+). 2 residues coordinate substrate: E297 and D322. K347 (proton acceptor) is an active-site residue. Residues 374–377 and K398 contribute to the substrate site; that span reads SHRS.

This sequence belongs to the enolase family. In terms of assembly, homodimer. Requires Mg(2+) as cofactor.

It localises to the cytoplasm. It carries out the reaction (2R)-2-phosphoglycerate = phosphoenolpyruvate + H2O. It functions in the pathway carbohydrate degradation; glycolysis; pyruvate from D-glyceraldehyde 3-phosphate: step 4/5. The sequence is that of Enolase (enoA) from Penicillium citrinum.